Reading from the N-terminus, the 518-residue chain is GMP synthase [glutamine-hydrolyzing] (518 aa).

Residues lysine 13–aspartate 203 enclose the Glutamine amidotransferase type-1 domain. Cysteine 90 (nucleophile) is an active-site residue. Active-site residues include histidine 177 and glutamate 179. A GMPS ATP-PPase domain is found at tryptophan 204–arginine 393. An ATP-binding site is contributed by serine 231–serine 237.

As to quaternary structure, homodimer.

The enzyme catalyses XMP + L-glutamine + ATP + H2O = GMP + L-glutamate + AMP + diphosphate + 2 H(+). Its pathway is purine metabolism; GMP biosynthesis; GMP from XMP (L-Gln route): step 1/1. In terms of biological role, catalyzes the synthesis of GMP from XMP. The polypeptide is GMP synthase [glutamine-hydrolyzing] (Listeria welshimeri serovar 6b (strain ATCC 35897 / DSM 20650 / CCUG 15529 / CIP 8149 / NCTC 11857 / SLCC 5334 / V8)).